The following is a 558-amino-acid chain: Formate--tetrahydrofolate ligase (558 aa).

66-73 (TPAGEGKT) provides a ligand contact to ATP.

The protein belongs to the formate--tetrahydrofolate ligase family.

It carries out the reaction (6S)-5,6,7,8-tetrahydrofolate + formate + ATP = (6R)-10-formyltetrahydrofolate + ADP + phosphate. The protein operates within one-carbon metabolism; tetrahydrofolate interconversion. The chain is Formate--tetrahydrofolate ligase from Clostridioides difficile (strain 630) (Peptoclostridium difficile).